A 249-amino-acid polypeptide reads, in one-letter code: tRNA 2'-phosphotransferase 1 (249 aa).

The residue at position 1 (methionine 1) is an N-acetylmethionine. Disordered stretches follow at residues 1–25 (MNAPGGRRKEGRRTHRPREQDRNVQ) and 220–249 (KPLSLAGDKETETQSGPKLSSRGGRRKIQQ).

The protein belongs to the KptA/TPT1 family.

It catalyses the reaction 2'-phospho-[ligated tRNA] + NAD(+) = mature tRNA + ADP-alpha-D-ribose 1'',2''-cyclic phosphate + nicotinamide. Functionally, catalyzes the last step of tRNA splicing, the transfer of the splice junction 2'-phosphate from ligated tRNA to NAD to produce ADP-ribose 1''-2'' cyclic phosphate. This chain is tRNA 2'-phosphotransferase 1 (Trpt1), found in Mus musculus (Mouse).